Reading from the N-terminus, the 567-residue chain is Urease subunit alpha (567 aa).

The Urease domain occupies 129–567; the sequence is GGVDTHIHWI…LPMAQRYFLF (439 aa). Residues His134, His136, and Lys217 each coordinate Ni(2+). Lys217 carries the post-translational modification N6-carboxylysine. His219 lines the substrate pocket. Ni(2+)-binding residues include His246 and His272. The Proton donor role is filled by His320. Position 360 (Asp360) interacts with Ni(2+).

The protein belongs to the metallo-dependent hydrolases superfamily. Urease alpha subunit family. Heterotrimer of UreA (gamma), UreB (beta) and UreC (alpha) subunits. Three heterotrimers associate to form the active enzyme. Ni cation is required as a cofactor. Carboxylation allows a single lysine to coordinate two nickel ions.

It is found in the cytoplasm. It catalyses the reaction urea + 2 H2O + H(+) = hydrogencarbonate + 2 NH4(+). The protein operates within nitrogen metabolism; urea degradation; CO(2) and NH(3) from urea (urease route): step 1/1. The chain is Urease subunit alpha from Citrobacter koseri (strain ATCC BAA-895 / CDC 4225-83 / SGSC4696).